The sequence spans 315 residues: Energy-coupling factor transporter ATP-binding protein EcfA2 (315 aa).

One can recognise an ABC transporter domain in the interval 31 to 275 (IILDNVSYTY…QELLSKIQIE (245 aa)). 68–75 (GTTGSGKS) provides a ligand contact to ATP.

The protein belongs to the ABC transporter superfamily. Energy-coupling factor EcfA family. As to quaternary structure, forms a stable energy-coupling factor (ECF) transporter complex composed of 2 membrane-embedded substrate-binding proteins (S component), 2 ATP-binding proteins (A component) and 2 transmembrane proteins (T component).

The protein resides in the cell membrane. In terms of biological role, ATP-binding (A) component of a common energy-coupling factor (ECF) ABC-transporter complex. Unlike classic ABC transporters this ECF transporter provides the energy necessary to transport a number of different substrates. This is Energy-coupling factor transporter ATP-binding protein EcfA2 from Mesoplasma florum (strain ATCC 33453 / NBRC 100688 / NCTC 11704 / L1) (Acholeplasma florum).